The primary structure comprises 333 residues: DNA-directed RNA polymerase subunit alpha (333 aa).

An alpha N-terminal domain (alpha-NTD) region spans residues 1-234 (MQISVNEFLT…QQLAAFVDLK (234 aa)). The alpha C-terminal domain (alpha-CTD) stretch occupies residues 248–333 (IDPILLRPVD…SLKKDDKATA (86 aa)).

The protein belongs to the RNA polymerase alpha chain family. As to quaternary structure, homodimer. The RNAP catalytic core consists of 2 alpha, 1 beta, 1 beta' and 1 omega subunit. When a sigma factor is associated with the core the holoenzyme is formed, which can initiate transcription.

It carries out the reaction RNA(n) + a ribonucleoside 5'-triphosphate = RNA(n+1) + diphosphate. DNA-dependent RNA polymerase catalyzes the transcription of DNA into RNA using the four ribonucleoside triphosphates as substrates. The chain is DNA-directed RNA polymerase subunit alpha from Pseudomonas fluorescens (strain Pf0-1).